Reading from the N-terminus, the 468-residue chain is Probable serine/threonine-protein phosphatase 2A activator 2 (468 aa).

Positions Ser-412–Ser-424 are enriched in low complexity. The disordered stretch occupies residues Ser-412 to Asp-468.

It belongs to the PTPA-type PPIase family.

Its subcellular location is the cytoplasm. The catalysed reaction is [protein]-peptidylproline (omega=180) = [protein]-peptidylproline (omega=0). Functionally, PPIases accelerate the folding of proteins. It catalyzes the cis-trans isomerization of proline imidic peptide bonds in oligopeptides. Acts as a regulatory subunit for PP2A-like phosphatases modulating their activity or substrate specificity, probably by inducing a conformational change in the catalytic subunit, a direct target of the PPIase. The sequence is that of Probable serine/threonine-protein phosphatase 2A activator 2 (ppp2r4B) from Dictyostelium discoideum (Social amoeba).